Consider the following 115-residue polypeptide: UPF0738 protein SERP0585 (115 aa).

It belongs to the UPF0738 family.

The polypeptide is UPF0738 protein SERP0585 (Staphylococcus epidermidis (strain ATCC 35984 / DSM 28319 / BCRC 17069 / CCUG 31568 / BM 3577 / RP62A)).